A 1372-amino-acid chain; its full sequence is MVSLRDNIEVQPLSHNKRVRKNFGHINLVADIPNLIEIQKNSYEKNFLQLDTKDSERKNKGLQSILNSIFPISDPSNIANLEFVKYEFDTPKYDVEECTQRSLSYDSALKVTLRLSIWDIDEDTGSREIKGIKEQQVYMGNIPLMTKNGTFIINGTERVVVSQMHRSPGVFFYHDEGKVHSSRKLLYSARVIPYRGSWLDLEFDAKDIIYFRIDRKRKLYATTLLKAIGMSTEEIIKFYYDSVNYKVVKNKGWAVKFMPSHITAHRLTSDLIDADTGNVLLKAGQKITPRLAKKYAGEGLNNILVSHEALIGKYLSEDLKDPESDEILAKIGEMITVELLSVISDLKIKNISVLVINPQSGPYIRNTLFSDKNQDRESALFDIFRVLRPGEPANIEAAESLFYNLFFDPERYDLSEVGRIKMNSRLELNISDETTVLTTDDIKNILRVLVELKDRKGIIDDIDHLGNRRVRSVGELIENQFRIGLVRMEKSVVERMSAGDIDTVMPHDLVNSKILVSVVKEFFSTSQLSQFMDQTNPLSEITHKRRLSALGPGGLSRDRAGFEVRDVHPTHYGRICPIETPEGQNIGLINSMATYARINKHGFIESPYRKVKDGHVTDEVVYLSAIEEGKYKIGQANSKVDKDGILQGEFINCRVEGGNFVMVEPHEVDFIDVTPMQVVSVAASLIPFLENDDANRALMGSNMQRQAVPLIKTDAPFVGTGVEGVVAKDSGASVLALNDGIVEQVDSNRIVIRAIGQKTESAPSVDIYNLLKFQKSNHNTCINQKPLVKVGHYVKKNDIIADGPSTDNGEIALGRNVLVAFLPWNGYNFEDSILISERIVKEDVFTSVHIEEFEVIARDTRLGPEEITRDIPNVSEEALRHLDEVGIIYVGAEVKAGDILVGKVTPKSESPITPEEKLLRAIFGEKAFDVKDSSLHVPSGVSGTVVEVRVFSRRGVEKDQRAIAIEKQQIEKLAKDRDDELEIIEHFVFSWLEKLLVGQVSINGPKTVKTGQTITSEILKGLSKGQLWQFTVEDANVMNEIEQLKGHYDGKKEALNKRFATKVEKLQSGDDLPQGALKVVKVFIATKHKLQPGDKMAGRHGNKGVISRIVPEEDMPFLEDGTVVDIVLNPLGLPSRMNIGQVLETHLGWASVNLAKKIAGLVEEHKTKHASIEKIKKFLIELYGENINHILEKSDEEIISFCNEAAKGVYFATPVFDGAKVEDVKDMLRLAGQDLSGQVKLIDGRTGEYFDRLVTVGQKYLLKLHHLVDNKIHSRSIGPYSLVTQQPLGGKSHFGGQRFGEMECWALQAYGAAYTLQEMLTVKSDDVNGRIKIYDSIVRGENNFESGIPESFNVMIKEFRSLCLNVKLEVTS.

Belongs to the RNA polymerase beta chain family. In terms of assembly, the RNAP catalytic core consists of 2 alpha, 1 beta, 1 beta' and 1 omega subunit. When a sigma factor is associated with the core the holoenzyme is formed, which can initiate transcription.

The catalysed reaction is RNA(n) + a ribonucleoside 5'-triphosphate = RNA(n+1) + diphosphate. Its function is as follows. DNA-dependent RNA polymerase catalyzes the transcription of DNA into RNA using the four ribonucleoside triphosphates as substrates. The chain is DNA-directed RNA polymerase subunit beta from Rickettsia bellii (strain OSU 85-389).